Consider the following 957-residue polypeptide: Nitrite reductase [NAD(P)H] large subunit (957 aa).

44 to 79 (YDRVHLTEYFAGRSAESLSLVEGDFFTQHGIELRLS) contacts FAD. 193 to 225 (LREKISELGVGVHTSKATTEIVRNEQGLQLNFR) contacts NAD(+). [2Fe-2S] cluster-binding residues include Cys-423, Cys-425, Cys-457, and Cys-460. Positions 639, 645, 679, and 683 each coordinate [4Fe-4S] cluster. Cys-683 lines the siroheme pocket.

This sequence belongs to the nitrite and sulfite reductase 4Fe-4S domain family. Homodimer which associates with NirD. Siroheme serves as cofactor. [2Fe-2S] cluster is required as a cofactor. Requires [4Fe-4S] cluster as cofactor. The cofactor is FAD.

The catalysed reaction is NH4(+) + 3 NADP(+) + 2 H2O = nitrite + 3 NADPH + 5 H(+). It carries out the reaction NH4(+) + 3 NAD(+) + 2 H2O = nitrite + 3 NADH + 5 H(+). It functions in the pathway nitrogen metabolism; nitrate reduction (assimilation). In Klebsiella oxytoca, this protein is Nitrite reductase [NAD(P)H] large subunit (nasB).